A 78-amino-acid polypeptide reads, in one-letter code: Large ribosomal subunit protein bL28 (78 aa).

It belongs to the bacterial ribosomal protein bL28 family.

The protein is Large ribosomal subunit protein bL28 of Klebsiella pneumoniae (strain 342).